Consider the following 202-residue polypeptide: Protein-methionine-sulfoxide reductase heme-binding subunit MsrQ (202 aa).

6 helical membrane passes run 8–28 (LAVFLGALAMPAWWLYQAWIF), 42–62 (LGLGALVLLLLTLAMTPLQKL), 75–95 (LGLWCFTYALLHLSAYCVFIL), 110–130 (PYIIVGMLGFICLFLLAITSN), 147–167 (LVYLILGLGLLHMLWVVRADL), and 169–189 (EWTLYAVVGASLMLLRLPSIA).

It belongs to the MsrQ family. Heterodimer of a catalytic subunit (MsrP) and a heme-binding subunit (MsrQ). It depends on FMN as a cofactor. Heme b is required as a cofactor.

Its subcellular location is the cell inner membrane. Functionally, part of the MsrPQ system that repairs oxidized periplasmic proteins containing methionine sulfoxide residues (Met-O), using respiratory chain electrons. Thus protects these proteins from oxidative-stress damage caused by reactive species of oxygen and chlorine generated by the host defense mechanisms. MsrPQ is essential for the maintenance of envelope integrity under bleach stress, rescuing a wide series of structurally unrelated periplasmic proteins from methionine oxidation. MsrQ provides electrons for reduction to the reductase catalytic subunit MsrP, using the quinone pool of the respiratory chain. In Pseudomonas paraeruginosa (strain DSM 24068 / PA7) (Pseudomonas aeruginosa (strain PA7)), this protein is Protein-methionine-sulfoxide reductase heme-binding subunit MsrQ.